The chain runs to 370 residues: GTPase Obg (370 aa).

Residues 1 to 159 (MKFIDEARIE…RMLRLELKVL (159 aa)) enclose the Obg domain. The interval 127–146 (NLHFKSSTNRAPRQKTDGKP) is disordered. One can recognise an OBG-type G domain in the interval 160 to 334 (ADVGLLGMPN…LCYAIYDYLA (175 aa)). GTP-binding positions include 166 to 173 (GMPNAGKS), 191 to 195 (FTTLA), 213 to 216 (DIPG), 284 to 287 (NKLD), and 315 to 317 (SAL). The Mg(2+) site is built by Ser-173 and Thr-193.

Belongs to the TRAFAC class OBG-HflX-like GTPase superfamily. OBG GTPase family. In terms of assembly, monomer. Requires Mg(2+) as cofactor.

It is found in the cytoplasm. Functionally, an essential GTPase which binds GTP, GDP and possibly (p)ppGpp with moderate affinity, with high nucleotide exchange rates and a fairly low GTP hydrolysis rate. Plays a role in control of the cell cycle, stress response, ribosome biogenesis and in those bacteria that undergo differentiation, in morphogenesis control. The chain is GTPase Obg from Burkholderia lata (strain ATCC 17760 / DSM 23089 / LMG 22485 / NCIMB 9086 / R18194 / 383).